The chain runs to 101 residues: Small ribosomal subunit protein uS14 (101 aa).

It belongs to the universal ribosomal protein uS14 family. Part of the 30S ribosomal subunit. Contacts proteins S3 and S10.

Binds 16S rRNA, required for the assembly of 30S particles and may also be responsible for determining the conformation of the 16S rRNA at the A site. This chain is Small ribosomal subunit protein uS14, found in Nitrosomonas europaea (strain ATCC 19718 / CIP 103999 / KCTC 2705 / NBRC 14298).